The primary structure comprises 198 residues: Leucyl/phenylalanyl-tRNA--protein transferase (198 aa).

It belongs to the L/F-transferase family.

Its subcellular location is the cytoplasm. The catalysed reaction is N-terminal L-lysyl-[protein] + L-leucyl-tRNA(Leu) = N-terminal L-leucyl-L-lysyl-[protein] + tRNA(Leu) + H(+). The enzyme catalyses N-terminal L-arginyl-[protein] + L-leucyl-tRNA(Leu) = N-terminal L-leucyl-L-arginyl-[protein] + tRNA(Leu) + H(+). It catalyses the reaction L-phenylalanyl-tRNA(Phe) + an N-terminal L-alpha-aminoacyl-[protein] = an N-terminal L-phenylalanyl-L-alpha-aminoacyl-[protein] + tRNA(Phe). Functions in the N-end rule pathway of protein degradation where it conjugates Leu, Phe and, less efficiently, Met from aminoacyl-tRNAs to the N-termini of proteins containing an N-terminal arginine or lysine. This chain is Leucyl/phenylalanyl-tRNA--protein transferase, found in Synechocystis sp. (strain ATCC 27184 / PCC 6803 / Kazusa).